A 127-amino-acid polypeptide reads, in one-letter code: Fumarate reductase subunit C (127 aa).

3 helical membrane-spanning segments follow: residues 30–50, 67–87, and 107–127; these read ATIL…GCLV, IVVV…QTFF, and IIVL…LVLV.

The protein belongs to the FrdC family. Part of an enzyme complex containing four subunits: a flavoprotein (FrdA), an iron-sulfur protein (FrdB), and two hydrophobic anchor proteins (FrdC and FrdD).

It is found in the cell inner membrane. Its function is as follows. Anchors the catalytic components of the fumarate reductase complex to the cell membrane, binds quinones. The chain is Fumarate reductase subunit C from Photobacterium profundum (strain SS9).